The following is a 61-amino-acid chain: Probable tautomerase BH3814 (61 aa).

P2 serves as the catalytic Proton acceptor; via imino nitrogen.

Belongs to the 4-oxalocrotonate tautomerase family.

The protein is Probable tautomerase BH3814 of Halalkalibacterium halodurans (strain ATCC BAA-125 / DSM 18197 / FERM 7344 / JCM 9153 / C-125) (Bacillus halodurans).